We begin with the raw amino-acid sequence, 147 residues long: Hemoglobin subunit gamma-2 (147 aa).

Positions 3 to 147 constitute a Globin domain; the sequence is HFTEEDKATI…VASALSSRYH (145 aa). The residue at position 13 (Thr13) is a Phosphothreonine. Phosphoserine is present on residues Ser45, Ser51, and Ser53. Residue Lys60 is modified to N6-acetyllysine. His64 lines the heme b pocket. Lys83 bears the N6-acetyllysine mark. Residue His93 coordinates heme b. Residue Cys94 is modified to S-nitrosocysteine. Phosphoserine occurs at positions 140, 143, and 144.

Belongs to the globin family. Heterotetramer of two alpha chains and two gamma chains in fetal hemoglobin (Hb F). In terms of tissue distribution, red blood cells.

Its function is as follows. Gamma chains make up the fetal hemoglobin F, in combination with alpha chains. The sequence is that of Hemoglobin subunit gamma-2 (HBG2) from Hylobates lar (Lar gibbon).